Reading from the N-terminus, the 557-residue chain is Dihydroxy-acid dehydratase (557 aa).

Residue Cys49 participates in [2Fe-2S] cluster binding. Asp81 contacts Mg(2+). Position 122 (Cys122) interacts with [2Fe-2S] cluster. Positions 123 and 124 each coordinate Mg(2+). An N6-carboxylysine modification is found at Lys124. Cys194 serves as a coordination point for [2Fe-2S] cluster. Position 446 (Glu446) interacts with Mg(2+). Ser472 acts as the Proton acceptor in catalysis.

This sequence belongs to the IlvD/Edd family. In terms of assembly, homodimer. [2Fe-2S] cluster serves as cofactor. Mg(2+) is required as a cofactor.

It catalyses the reaction (2R)-2,3-dihydroxy-3-methylbutanoate = 3-methyl-2-oxobutanoate + H2O. The catalysed reaction is (2R,3R)-2,3-dihydroxy-3-methylpentanoate = (S)-3-methyl-2-oxopentanoate + H2O. Its pathway is amino-acid biosynthesis; L-isoleucine biosynthesis; L-isoleucine from 2-oxobutanoate: step 3/4. The protein operates within amino-acid biosynthesis; L-valine biosynthesis; L-valine from pyruvate: step 3/4. Functions in the biosynthesis of branched-chain amino acids. Catalyzes the dehydration of (2R,3R)-2,3-dihydroxy-3-methylpentanoate (2,3-dihydroxy-3-methylvalerate) into 2-oxo-3-methylpentanoate (2-oxo-3-methylvalerate) and of (2R)-2,3-dihydroxy-3-methylbutanoate (2,3-dihydroxyisovalerate) into 2-oxo-3-methylbutanoate (2-oxoisovalerate), the penultimate precursor to L-isoleucine and L-valine, respectively. The sequence is that of Dihydroxy-acid dehydratase from Prochlorococcus marinus (strain MIT 9215).